Here is a 206-residue protein sequence, read N- to C-terminus: Large ribosomal subunit protein uL4 (206 aa).

Over residues 48 to 59 (THDTKTRSEVRG) the composition is skewed to basic and acidic residues. Positions 48–77 (THDTKTRSEVRGGGRKPWRQKGTGRARHGS) are disordered. Basic residues predominate over residues 60 to 77 (GGRKPWRQKGTGRARHGS).

This sequence belongs to the universal ribosomal protein uL4 family. As to quaternary structure, part of the 50S ribosomal subunit.

Functionally, one of the primary rRNA binding proteins, this protein initially binds near the 5'-end of the 23S rRNA. It is important during the early stages of 50S assembly. It makes multiple contacts with different domains of the 23S rRNA in the assembled 50S subunit and ribosome. Forms part of the polypeptide exit tunnel. The sequence is that of Large ribosomal subunit protein uL4 from Pelotomaculum thermopropionicum (strain DSM 13744 / JCM 10971 / SI).